The following is a 188-amino-acid chain: RWD domain-containing protein 4 (188 aa).

Ser-2 carries the N-acetylserine modification. The RWD domain occupies 9-111 (MELEALRSIY…EYAKDNKEQF (103 aa)). The tract at residues 132-167 (TPNTAPSSKKKDKKEQLSKAQKRKLADKTDHKGELP) is disordered. Basic and acidic residues predominate over residues 155–166 (KLADKTDHKGEL).

The protein is RWD domain-containing protein 4 (RWDD4) of Homo sapiens (Human).